The chain runs to 407 residues: MLFDKVKAFVVEIDGARTGTEPVFHGGQAVAGRVLLELAGAARVGALRLRARGRARAHWTESRSAGSSTAYTQSYSERVEVVNHRATLLAPDSGDIATLPAGRHEFPFSFQLPISLVTSFEGKHGSVRYSIKATLHRPWVPARCARKVFTVIEPVDINTPALLEPQAGAREKVARSWYCTRGLVSLSAKIDRKGYTPGEVIPIFAEIDNGSTRAVQPRAALVQTQTFMARGARKQKRAVVASVDGEPVGPNRRALWPGRALRIPPVGPSILQCRVLSVDYSLKVFVDIPGSSKLLLELPLVIGTVPLHPLGSRSASVGSRASFLQDWGLCTMMDRPEAPPEYSEVVRESQLVCASPGPSSLLHDLGVTTEGPYFACLQEFRYCPPPLYSEEDPNPPSEAVRPRCMTC.

This sequence belongs to the arrestin family. As to quaternary structure, interacts with WWP1 (via WW domains).

The sequence is that of Arrestin domain-containing protein 2 (Arrdc2) from Mus musculus (Mouse).